Consider the following 249-residue polypeptide: Aquaporin TIP4-3 (249 aa).

The next 2 helical transmembrane spans lie at 20–40 (GVLG…GAAM) and 56–76 (TAVA…GFHI). The short motif at 82–84 (NPA) is the NPA 1 element. Helical transmembrane passes span 100–122 (SSLY…RWLT), 141–161 (GVVA…ATIL), and 169–189 (GAGP…GAAL). An NPA 2 motif is present at residues 195–197 (NPA). The helical transmembrane segment at 214 to 234 (VYWVGPLAGGPLAVLVYECCF) threads the bilayer.

It belongs to the MIP/aquaporin (TC 1.A.8) family. TIP (TC 1.A.8.10) subfamily.

The protein resides in the vacuole membrane. In terms of biological role, aquaporins facilitate the transport of water and small neutral solutes across cell membranes. In Zea mays (Maize), this protein is Aquaporin TIP4-3 (TIP4-3).